The following is a 137-amino-acid chain: Envelope glycoprotein L (137 aa).

Positions M1–A25 are cleaved as a signal peptide. The interval N23–L128 is interaction with gH. 2 disulfides stabilise this stretch: C28–C56 and C29–C79.

Belongs to the herpesviridae glycoprotein L family. In terms of assembly, interacts with glycoprotein H (gH); this interaction is necessary for the correct processing and cell surface expression of gH. The heterodimer gH/gL seems to interact with gB trimers during fusion. The heterodimer gH/gL interacts with host EPHA2 to facilitate virus internalization and fusion.

The protein resides in the virion membrane. It is found in the host cell membrane. Its subcellular location is the host Golgi apparatus. The protein localises to the host trans-Golgi network. The heterodimer glycoprotein H-glycoprotein L is required for the fusion of viral and plasma membranes leading to virus entry into the host cell. Acts as a functional inhibitor of gH and maintains gH in an inhibited form. Upon binding to host integrins, gL dissociates from gH leading to activation of the viral fusion glycoproteins gB and gH. The heterodimer gH/gL targets also host EPHA2 to promote viral entry. The sequence is that of Envelope glycoprotein L from Homo sapiens (Human).